The primary structure comprises 58 residues: Small ribosomal subunit protein bS21 (58 aa).

The tract at residues Gly-27–Lys-58 is disordered. Positions Glu-31–Ser-42 are enriched in basic and acidic residues. The span at Val-43–Lys-58 shows a compositional bias: basic residues.

This sequence belongs to the bacterial ribosomal protein bS21 family.

The protein is Small ribosomal subunit protein bS21 of Desulfitobacterium hafniense (strain DSM 10664 / DCB-2).